The chain runs to 605 residues: Apoptosis-inducing factor 3 (605 aa).

A compositionally biased stretch (basic and acidic residues) spans 18-29 (VLPEKERGKEEL). Residues 18-44 (VLPEKERGKEELSASGKGSPRGYQGNG) are disordered. The Rieske domain maps to 70 to 165 (ATVCHVKDLE…VKIEKEKVTI (96 aa)). Cys109, His111, Cys128, and His131 together coordinate [2Fe-2S] cluster. Residues 201-205 (GAGAA), Arg235, Lys240, Val270, Asp467, and Trp514 contribute to the FAD site.

This sequence belongs to the FAD-dependent oxidoreductase family.

The protein localises to the mitochondrion. Induces apoptosis through a caspase dependent pathway. Reduces mitochondrial membrane potential. This chain is Apoptosis-inducing factor 3 (Aifm3), found in Mus musculus (Mouse).